A 313-amino-acid chain; its full sequence is tRNA dimethylallyltransferase (313 aa).

G9–T16 is a binding site for ATP. Residue T11–T16 coordinates substrate. Positions D34 to Q37 are interaction with substrate tRNA.

Belongs to the IPP transferase family. In terms of assembly, monomer. Mg(2+) is required as a cofactor.

The enzyme catalyses adenosine(37) in tRNA + dimethylallyl diphosphate = N(6)-dimethylallyladenosine(37) in tRNA + diphosphate. Its function is as follows. Catalyzes the transfer of a dimethylallyl group onto the adenine at position 37 in tRNAs that read codons beginning with uridine, leading to the formation of N6-(dimethylallyl)adenosine (i(6)A). This is tRNA dimethylallyltransferase from Lachnoclostridium phytofermentans (strain ATCC 700394 / DSM 18823 / ISDg) (Clostridium phytofermentans).